Here is a 977-residue protein sequence, read N- to C-terminus: Ephrin type-A receptor 2 (977 aa).

An N-terminal signal peptide occupies residues 1-25 (MELRAVGFCLALLWGCALAAAAAQG). The tract at residues 1 to 205 (MELRAVGFCL…YYKKCPEMLQ (205 aa)) is mediates interaction with CLDN4. At 26–538 (KEVVLLDFAA…STEGSANMAV (513 aa)) the chain is on the extracellular side. One can recognise an Eph LBD domain in the interval 27–205 (EVVLLDFAAM…YYKKCPEMLQ (179 aa)). 2 disulfides stabilise this stretch: Cys69-Cys187 and Cys104-Cys114. The Fibronectin type-III 1 domain maps to 329–433 (PPSAPNYLTA…TSRSFRTASV (105 aa)). 2 N-linked (GlcNAc...) asparagine glycosylation sites follow: Asn408 and Asn436. Residues 439–530 (EPPKVRLEDR…KVHEFQTLST (92 aa)) enclose the Fibronectin type-III 2 domain. A helical membrane pass occupies residues 539 to 559 (IGGVAVGVVLLLVLAGVGLFI). Residues 560–977 (HRRRRNLRAR…DQVNTVGIPI (418 aa)) lie on the Cytoplasmic side of the membrane. Phosphoserine is present on residues Ser571 and Ser580. 2 positions are modified to phosphotyrosine; by autocatalysis: Tyr589 and Tyr595. Positions 607-907 (TEIHPSCVAR…STSGSEGVPF (301 aa)) are mediates interaction with ARHGEF16. Residues 614–876 (VARQKVIGAG…DIVSILDKLI (263 aa)) form the Protein kinase domain. ATP is bound at residue 620-628 (IGAGEFGEV). Tyr629 bears the Phosphotyrosine mark. Lys647 lines the ATP pocket. Position 648 is a phosphothreonine (Thr648). Tyr736 is modified (phosphotyrosine; by autocatalysis). Asp740 acts as the Proton acceptor in catalysis. At Tyr773 the chain carries Phosphotyrosine; by autocatalysis. Phosphoserine is present on residues Ser870, Ser893, Ser898, and Ser902. The interval 887-977 (DFDPRVSIRL…DQVNTVGIPI (91 aa)) is negatively regulates interaction with ARHGEF16. Residues 905 to 969 (VPFRTVSEWL…AYSLLGLKDQ (65 aa)) form the SAM domain. Residue Tyr922 is modified to Phosphotyrosine; by autocatalysis. Tyr931 carries the phosphotyrosine modification. A PDZ-binding motif is present at residues 975–977 (IPI).

The protein belongs to the protein kinase superfamily. Tyr protein kinase family. Ephrin receptor subfamily. As to quaternary structure, homodimer. Interacts with INPPL1; regulates activated EPHA2 endocytosis and degradation. Interacts (inactivated form) with PTK2/FAK1 and interacts (EFNA1 ligand-activated form) with PTPN11; regulates integrin-mediated adhesion. Interacts with ARHGEF16, DOCK4 and ELMO2; mediates ligand-independent activation of RAC1 which stimulates cell migration. Interacts with CLDN4; phosphorylates CLDN4 and may regulate tight junctions. Interacts with ACP1. Interacts with CEMIP. Interacts with NCK1; may regulate EPHA2 activity in cell migration and adhesion. Interacts with SLA. Interacts (phosphorylated form) with VAV2, VAV3 and PI3-kinase p85 subunit (PIK3R1, PIK3R2 or PIK3R3); critical for the EFNA1-induced activation of RAC1 which stimulates cell migration. Interacts with ANKS1A. Interacts with TIMD4. Post-translationally, autophosphorylates. Phosphorylated at Ser-898 by PKB; serum-induced phosphorylation which targets EPHA2 to the cell leading edge and stimulates cell migration. Phosphorylation by PKB is inhibited by EFNA1-activated EPHA2 which regulates PKB activity via a reciprocal regulatory loop. Phosphorylated on tyrosine upon binding and activation by EFNA1. Phosphorylated residues Tyr-589 and Tyr-595 are required for binding VAV2 and VAV3 while phosphorylated residues Tyr-736 and Tyr-931 are required for binding PI3-kinase p85 subunit (PIK3R1, PIK3R2 or PIK3R3). These phosphorylated residues are critical for recruitment of VAV2 and VAV3 and PI3-kinase p85 subunit which transduce downstream signaling to activate RAC1 GTPase and cell migration. Dephosphorylation of Tyr-931 by PTPRF prevents the interaction of EPHA2 with NCK1. Phosphorylated at Ser-898 in response to TNF by RPS6KA1 and RPS6KA3; RPS6KA-EPHA2 signaling pathway controls cell migration. Phosphorylated at Ser-898 by PKA; blocks cell retraction induced by EPHA2 kinase activity. Dephosphorylated by ACP1. In terms of processing, ubiquitinated by CHIP/STUB1. Ubiquitination is regulated by the HSP90 chaperone and regulates the receptor stability and activity through proteasomal degradation. ANKS1A prevents ubiquitination and degradation. Expressed in the lung, intestine and liver. Expressed in myogenic progenitor cells.

It localises to the cell membrane. It is found in the cell projection. Its subcellular location is the ruffle membrane. The protein resides in the lamellipodium membrane. The protein localises to the cell junction. It localises to the focal adhesion. It catalyses the reaction L-tyrosyl-[protein] + ATP = O-phospho-L-tyrosyl-[protein] + ADP + H(+). Its function is as follows. Receptor tyrosine kinase which binds promiscuously membrane-bound ephrin-A family ligands residing on adjacent cells, leading to contact-dependent bidirectional signaling into neighboring cells. The signaling pathway downstream of the receptor is referred to as forward signaling while the signaling pathway downstream of the ephrin ligand is referred to as reverse signaling. Activated by the ligand ephrin-A1/EFNA1 regulates migration, integrin-mediated adhesion, proliferation and differentiation of cells. Regulates cell adhesion and differentiation through DSG1/desmoglein-1 and inhibition of the ERK1/ERK2 signaling pathway. May also participate in UV radiation-induced apoptosis and have a ligand-independent stimulatory effect on chemotactic cell migration. During development, may function in distinctive aspects of pattern formation and subsequently in development of several fetal tissues. Involved for instance in angiogenesis, in early hindbrain development and epithelial proliferation and branching morphogenesis during mammary gland development. Engaged by the ligand ephrin-A5/EFNA5 may regulate lens fiber cells shape and interactions and be important for lens transparency development and maintenance. With ephrin-A2/EFNA2 may play a role in bone remodeling through regulation of osteoclastogenesis and osteoblastogenesis. The sequence is that of Ephrin type-A receptor 2 (Epha2) from Mus musculus (Mouse).